Here is a 579-residue protein sequence, read N- to C-terminus: Proteasome-associated ATPase (579 aa).

The interval methionine 1–glutamate 21 is disordered. Residues glutamate 8–proline 86 are a coiled coil. Glycine 268–leucine 273 is an ATP binding site. The tract at residues tyrosine 578–leucine 579 is docks into pockets in the proteasome alpha-ring.

This sequence belongs to the AAA ATPase family. Homohexamer. Assembles into a hexameric ring structure that caps the 20S proteasome core. Strongly interacts with the prokaryotic ubiquitin-like protein Pup through a hydrophobic interface; the interacting region of ARC lies in its N-terminal coiled-coil domain. There is one Pup binding site per ARC hexamer ring. Upon ATP-binding, the C-terminus of ARC interacts with the alpha-rings of the proteasome core, possibly by binding to the intersubunit pockets.

Its pathway is protein degradation; proteasomal Pup-dependent pathway. Functionally, ATPase which is responsible for recognizing, binding, unfolding and translocation of pupylated proteins into the bacterial 20S proteasome core particle. May be essential for opening the gate of the 20S proteasome via an interaction with its C-terminus, thereby allowing substrate entry and access to the site of proteolysis. Thus, the C-termini of the proteasomal ATPase may function like a 'key in a lock' to induce gate opening and therefore regulate proteolysis. The sequence is that of Proteasome-associated ATPase from Acidimicrobium ferrooxidans (strain DSM 10331 / JCM 15462 / NBRC 103882 / ICP).